We begin with the raw amino-acid sequence, 187 residues long: MQCPYCQHTNSRVLESRSSEGGQSIRRRRECLNCKHRFTTYERIEFVPITVIKHDGKKESFDASKLLRGMVRACEKTGISHQRLETIVDDIEAYLQQRPQREVTTHEIGQLVLKYLREENEVAYIRFASVYGRFKGIKDFVETLDQLQEETISSPMSQWSKSSTRDRDQSQTSPCLSLTHNGSENSR.

The interval 1-21 (MQCPYCQHTNSRVLESRSSEG) is disordered. A zinc finger spans residues 3–34 (CPYCQHTNSRVLESRSSEGGQSIRRRRECLNC). The 91-residue stretch at 49-139 (ITVIKHDGKK…VYGRFKGIKD (91 aa)) folds into the ATP-cone domain. 2 stretches are compositionally biased toward polar residues: residues 152–162 (ISSPMSQWSKS) and 170–187 (SQTS…ENSR). Residues 152-187 (ISSPMSQWSKSSTRDRDQSQTSPCLSLTHNGSENSR) are disordered.

Belongs to the NrdR family. Zn(2+) serves as cofactor.

In terms of biological role, negatively regulates transcription of bacterial ribonucleotide reductase nrd genes and operons by binding to NrdR-boxes. This chain is Transcriptional repressor NrdR, found in Crocosphaera subtropica (strain ATCC 51142 / BH68) (Cyanothece sp. (strain ATCC 51142)).